A 65-amino-acid chain; its full sequence is Large ribosomal subunit protein bL35 (65 aa).

This sequence belongs to the bacterial ribosomal protein bL35 family.

The protein is Large ribosomal subunit protein bL35 of Thermus thermophilus (strain ATCC BAA-163 / DSM 7039 / HB27).